The primary structure comprises 428 residues: Adenylosuccinate synthetase (428 aa).

GTP-binding positions include 11–17 and 39–41; these read GDEGKGK and GHT. D12 (proton acceptor) is an active-site residue. Mg(2+) contacts are provided by D12 and G39. Residues 12 to 15, 37 to 40, T130, R144, N226, T241, and R305 each bind IMP; these read DEGK and NAGH. H40 (proton donor) is an active-site residue. 301–307 is a binding site for substrate; sequence VTTGRKR. GTP-binding positions include R307, 333-335, and 415-417; these read KLD and GTG.

This sequence belongs to the adenylosuccinate synthetase family. As to quaternary structure, homodimer. Mg(2+) serves as cofactor.

Its subcellular location is the cytoplasm. The enzyme catalyses IMP + L-aspartate + GTP = N(6)-(1,2-dicarboxyethyl)-AMP + GDP + phosphate + 2 H(+). It functions in the pathway purine metabolism; AMP biosynthesis via de novo pathway; AMP from IMP: step 1/2. In terms of biological role, plays an important role in the de novo pathway and in the salvage pathway of purine nucleotide biosynthesis. Catalyzes the first committed step in the biosynthesis of AMP from IMP. The sequence is that of Adenylosuccinate synthetase from Candida albicans (strain SC5314 / ATCC MYA-2876) (Yeast).